The primary structure comprises 581 residues: Leucine aminopeptidase 3, chloroplastic (581 aa).

The transit peptide at 1-50 (MAVTLVTSCASSSRFHFRSFSSSPSSLSSCFVRFQLLSRLRVSFAITPLY) directs the protein to the chloroplast. Positions 350 and 355 each coordinate Mn(2+). Lysine 362 is a catalytic residue. Positions 375, 435, and 437 each coordinate Mn(2+). Arginine 439 is an active-site residue.

It belongs to the peptidase M17 family. As to quaternary structure, homohexamer (dimer of homotrimers). Requires Mn(2+) as cofactor.

It localises to the plastid. Its subcellular location is the chloroplast. It catalyses the reaction Release of an N-terminal amino acid, Xaa-|-Yaa-, in which Xaa is preferably Leu, but may be other amino acids including Pro although not Arg or Lys, and Yaa may be Pro. Amino acid amides and methyl esters are also readily hydrolyzed, but rates on arylamides are exceedingly low.. The catalysed reaction is Release of N-terminal proline from a peptide.. In terms of biological role, presumably involved in the processing and regular turnover of intracellular proteins. Catalyzes the removal of unsubstituted N-terminal amino acids from various peptides. Possesses Cys-Gly dipeptidase activity. The chain is Leucine aminopeptidase 3, chloroplastic from Arabidopsis thaliana (Mouse-ear cress).